The chain runs to 168 residues: Small ribosomal subunit protein uS9 (168 aa).

A compositionally biased stretch (acidic residues) spans 1–15 (MAQNEETTEAVEAEE). Positions 1–34 (MAQNEETTEAVEAEETLTSYTSESGAAEAAAPKK) are disordered.

It belongs to the universal ribosomal protein uS9 family.

The chain is Small ribosomal subunit protein uS9 from Arthrobacter sp. (strain FB24).